We begin with the raw amino-acid sequence, 236 residues long: Small ribosomal subunit protein uS2c (236 aa).

The protein belongs to the universal ribosomal protein uS2 family.

The protein localises to the plastid. It localises to the chloroplast. The polypeptide is Small ribosomal subunit protein uS2c (rps2) (Pisum sativum (Garden pea)).